Reading from the N-terminus, the 705-residue chain is Rab guanine nucleotide exchange factor sec2 (705 aa).

A coiled-coil region spans residues 144-285; it reads QTTLDDNLVA…KSVMQGMNIA (142 aa).

It belongs to the SEC2 family.

Its function is as follows. Guanine nucleotide exchange factor that plays an important role in regulating the growth and virulence, probably by regulating the autophagy pathway. Affects the sensitivity to cell wall disruptors and the cell wall thickness by regulating the expression levels of the cell wall integrity (CWI) pathway genes, thus coordinating the growth and virulence. Positively regulates the autophagy pathway to enhance the expression of CWI pathway genes in the presence of autophagy inducers. The protein is Rab guanine nucleotide exchange factor sec2 of Aspergillus fumigatus (strain ATCC MYA-4609 / CBS 101355 / FGSC A1100 / Af293) (Neosartorya fumigata).